Here is a 183-residue protein sequence, read N- to C-terminus: Ribulose bisphosphate carboxylase small subunit, chloroplastic 5 (183 aa).

Residues 1–42 constitute a chloroplast transit peptide; that stretch reads MAAAMMNKSVLLNKQCGKPAAVPKVVMSKGGFARTSAVNKNR.

It belongs to the RuBisCO small chain family. In terms of assembly, heterohexadecamer of 8 large and 8 small subunits.

It is found in the plastid. The protein localises to the chloroplast. RuBisCO catalyzes two reactions: the carboxylation of D-ribulose 1,5-bisphosphate, the primary event in carbon dioxide fixation, as well as the oxidative fragmentation of the pentose substrate. Both reactions occur simultaneously and in competition at the same active site. Although the small subunit is not catalytic it is essential for maximal activity. This is Ribulose bisphosphate carboxylase small subunit, chloroplastic 5 from Acetabularia acetabulum (Mermaid's wine glass).